The chain runs to 1393 residues: DNA-directed RNA polymerase subunit beta'' (1393 aa).

Zn(2+) is bound by residues Cys220, Cys291, Cys298, and Cys301.

This sequence belongs to the RNA polymerase beta' chain family. RpoC2 subfamily. In plastids the minimal PEP RNA polymerase catalytic core is composed of four subunits: alpha, beta, beta', and beta''. When a (nuclear-encoded) sigma factor is associated with the core the holoenzyme is formed, which can initiate transcription. Zn(2+) serves as cofactor.

It localises to the plastid. Its subcellular location is the chloroplast. The catalysed reaction is RNA(n) + a ribonucleoside 5'-triphosphate = RNA(n+1) + diphosphate. Functionally, DNA-dependent RNA polymerase catalyzes the transcription of DNA into RNA using the four ribonucleoside triphosphates as substrates. This chain is DNA-directed RNA polymerase subunit beta'', found in Gossypium hirsutum (Upland cotton).